Reading from the N-terminus, the 121-residue chain is Large ribosomal subunit protein bL20 (121 aa).

This sequence belongs to the bacterial ribosomal protein bL20 family.

In terms of biological role, binds directly to 23S ribosomal RNA and is necessary for the in vitro assembly process of the 50S ribosomal subunit. It is not involved in the protein synthesizing functions of that subunit. This is Large ribosomal subunit protein bL20 from Moorella thermoacetica (strain ATCC 39073 / JCM 9320).